The following is a 262-amino-acid chain: Hydroxyethylthiazole kinase (262 aa).

Met50 is a binding site for substrate. Positions 125 and 171 each coordinate ATP. Gly198 contacts substrate.

This sequence belongs to the Thz kinase family. Requires Mg(2+) as cofactor.

It carries out the reaction 5-(2-hydroxyethyl)-4-methylthiazole + ATP = 4-methyl-5-(2-phosphooxyethyl)-thiazole + ADP + H(+). Its pathway is cofactor biosynthesis; thiamine diphosphate biosynthesis; 4-methyl-5-(2-phosphoethyl)-thiazole from 5-(2-hydroxyethyl)-4-methylthiazole: step 1/1. Its function is as follows. Catalyzes the phosphorylation of the hydroxyl group of 4-methyl-5-beta-hydroxyethylthiazole (THZ). The protein is Hydroxyethylthiazole kinase of Shigella boydii serotype 18 (strain CDC 3083-94 / BS512).